An 80-amino-acid chain; its full sequence is Cell division protein ZapB (80 aa).

Residues 3–80 (FEVLEKLEAK…SLLGKMEDVE (78 aa)) are a coiled coil.

This sequence belongs to the ZapB family. In terms of assembly, homodimer. The ends of the coiled-coil dimer bind to each other, forming polymers. Interacts with FtsZ.

It is found in the cytoplasm. Functionally, non-essential, abundant cell division factor that is required for proper Z-ring formation. It is recruited early to the divisome by direct interaction with FtsZ, stimulating Z-ring assembly and thereby promoting cell division earlier in the cell cycle. Its recruitment to the Z-ring requires functional FtsA or ZipA. In Vibrio cholerae serotype O1 (strain ATCC 39541 / Classical Ogawa 395 / O395), this protein is Cell division protein ZapB.